Reading from the N-terminus, the 404-residue chain is uncharacterized protein (404 aa).

12 consecutive transmembrane segments (helical) span residues 16 to 36 (FAFFAAGFNTFAILYCVQPLM), 49 to 69 (AASLSLSVTTMLLAVSMLVFG), 79 to 99 (PIMGISMLAASVLCLASAFSP), 110 to 130 (IQGVALAGLPSIAMAYLGEEI), 133 to 153 (GSLGSAMGLYISGNAIGAVFG), 166 to 186 (WHMAMGTIGVISLIASVIFFI), 221 to 241 (FLIGFLLLGSNVALFNYIVYV), 252 to 272 (AFSSWIFIVMIVGIFSSSFIG), 283 to 303 (ILVMNIFIVIAGALFTINNML), 307 to 327 (ILGIALFTFGFFGGHSVASSW), 342 to 362 (LYLFFYYAGSSVFGTIGGLFW), and 364 to 384 (GFHWLGVVGMITFMLLVALWL).

Belongs to the major facilitator superfamily.

It is found in the cell membrane. This is an uncharacterized protein from Bacillus subtilis (strain 168).